We begin with the raw amino-acid sequence, 691 residues long: Pentatricopeptide repeat-containing protein At5g27110 (691 aa).

PPR repeat units follow at residues 38 to 68 (DVVLCKSLINVYFTCKDHCSARHVFENFDIR), 70 to 104 (DVYIWNSLMSGYSKNSMFHDTLEVFKRLLNCSICV), 106 to 140 (DSFTFPNVIKAYGALGREFLGRMIHTLVVKSGYVC), 141 to 171 (DVVVASSLVGMYAKFNLFENSLQVFDEMPER), 172 to 206 (DVASWNTVISCFYQSGEAEKALELFGRMESSGFEP), 207 to 241 (NSVSLTVAISACSRLLWLERGKEIHRKCVKKGFEL), 242 to 272 (DEYVNSALVDMYGKCDCLEVAREVFQKMPRK), 273 to 307 (SLVAWNSMIKGYVAKGDSKSCVEILNRMIIEGTRP), 308 to 342 (SQTTLTSILMACSRSRNLLHGKFIHGYVIRSVVNA), 343 to 373 (DIYVNCSLIDLYFKCGEANLAETVFSKTQKD), 374 to 408 (VAESWNVMISSYISVGNWFKAVEVYDQMVSVGVKP), 409 to 443 (DVVTFTSVLPACSQLAALEKGKQIHLSISESRLET), 444 to 474 (DELLLSALLDMYSKCGNEKEAFRIFNSIPKK), 475 to 509 (DVVSWTVMISAYGSHGQPREALYQFDEMQKFGLKP), 510 to 540 (DGVTLLAVLSACGHAGLIDEGLKFFSQMRSK), and 546 to 576 (IIEHYSCMIDILGRAGRLLEAYEIIQQTPET). The interval 582 to 657 (LLSTLFSACC…KPGCSWIEMS (76 aa)) is type E motif. The interval 658–688 (DKVCHFFAEDRSHLRAENVYECLALLSGHME) is type E(+) motif.

The protein belongs to the PPR family. PCMP-E subfamily.

The polypeptide is Pentatricopeptide repeat-containing protein At5g27110 (PCMP-E14) (Arabidopsis thaliana (Mouse-ear cress)).